The following is a 319-amino-acid chain: Acetyl esterase (319 aa).

Residues 91 to 93 (HGG) carry the Involved in the stabilization of the negatively charged intermediate by the formation of the oxyanion hole motif. Active-site residues include serine 165, aspartate 262, and histidine 292.

The protein belongs to the 'GDXG' lipolytic enzyme family. In terms of assembly, homodimer. Interacts with MalT and MelA.

Its subcellular location is the cytoplasm. Displays esterase activity towards short chain fatty esters (acyl chain length of up to 8 carbons). Able to hydrolyze triacetylglycerol (triacetin) and tributyrylglycerol (tributyrin), but not trioleylglycerol (triolein) or cholesterol oleate. Negatively regulates MalT activity by antagonizing maltotriose binding. Inhibits MelA galactosidase activity. This chain is Acetyl esterase, found in Escherichia coli O139:H28 (strain E24377A / ETEC).